Consider the following 576-residue polypeptide: Arginine--tRNA ligase (576 aa).

Positions 122-132 (PNVAKQMHVGH) match the 'HIGH' region motif.

It belongs to the class-I aminoacyl-tRNA synthetase family. As to quaternary structure, monomer.

Its subcellular location is the cytoplasm. The enzyme catalyses tRNA(Arg) + L-arginine + ATP = L-arginyl-tRNA(Arg) + AMP + diphosphate. This Yersinia pseudotuberculosis serotype I (strain IP32953) protein is Arginine--tRNA ligase.